Here is a 258-residue protein sequence, read N- to C-terminus: Very-long-chain aldehyde decarbonylase GL1-9 (258 aa).

5 helical membrane-spanning segments follow: residues 13–33, 63–83, 88–108, 149–169, and 175–195; these read MGTFAPIALYWVYAGGYQLVL, GVLLQQLVQAIVAMILFMVTS, VVVQPPIIIQAFQFLVAMLVM, PLEGLLLDTVGGAISFLVSGM, and VFFFCFAVLKTVDDHCGLWLP. The region spanning 101 to 237 is the Fatty acid hydroxylase domain; the sequence is FLVAMLVMDS…FSIWDRILGT (137 aa).

Belongs to the sterol desaturase family. In terms of assembly, homodimer.

It is found in the endoplasmic reticulum membrane. It catalyses the reaction a long-chain fatty aldehyde + 2 NADPH + O2 + H(+) = a long-chain alkane + formate + 2 NADP(+) + H2O. Aldehyde decarbonylase involved in the conversion of aldehydes to alkanes. Core component of a very-long-chain alkane synthesis complex. This chain is Very-long-chain aldehyde decarbonylase GL1-9, found in Oryza sativa subsp. indica (Rice).